The chain runs to 206 residues: Small ribosomal subunit protein uS4 (206 aa).

The S4 RNA-binding domain maps to 96–156 (CRLDNVVYRM…EKAKNQLRIV (61 aa)).

Belongs to the universal ribosomal protein uS4 family. In terms of assembly, part of the 30S ribosomal subunit. Contacts protein S5. The interaction surface between S4 and S5 is involved in control of translational fidelity.

In terms of biological role, one of the primary rRNA binding proteins, it binds directly to 16S rRNA where it nucleates assembly of the body of the 30S subunit. Its function is as follows. With S5 and S12 plays an important role in translational accuracy. This Pseudomonas fluorescens (strain Pf0-1) protein is Small ribosomal subunit protein uS4.